Reading from the N-terminus, the 419-residue chain is Inward rectifier potassium channel 16 (419 aa).

Residues 1–67 (MSYYGSSYRI…MVDIFTTLVD (67 aa)) lie on the Cytoplasmic side of the membrane. A helical transmembrane segment spans residues 68–94 (TKWRHMFVIFSLSYILSWLIFGSIFWL). The Extracellular segment spans residues 95–117 (IAFHHGDLLSDPDITPCVDNVHS). Positions 118–134 (FTAAFLFSLETQTTIGY) form an intramembrane region, helical; Pore-forming. The short motif at 131–136 (TIGYGY) is the Selectivity filter element. At 135 to 143 (GYRCVTEEC) the chain is on the extracellular side. A helical membrane pass occupies residues 144–171 (SVAVLTVILQSILSCIINTFIIGAALAK). At 172 to 419 (MATARKRAQT…LNRISMESQM (248 aa)) the chain is on the cytoplasmic side. Residues Ser358, Ser374, and Ser376 each carry the phosphoserine modification.

Belongs to the inward rectifier-type potassium channel (TC 1.A.2.1) family. KCNJ16 subfamily. As to quaternary structure, it forms heteromeric channels with Kir4.1/KCNJ10; this interaction is required for KCNJ16 localization to the basolateral membrane in kidney cells. As a heteromer with KCNJ10, may interact with MAGI1; this interaction may facilitate KCNJ10/KCNJ16 potassium channel expression at the basolateral membrane in kidney cells. May form heteromers with Kir2.1/KCNJ2. Can form heteromeric channels with Kir4.2/KCNJ15. As to expression, abundantly expressed in the proximal and distal segments of the nephron.

The protein resides in the membrane. Its subcellular location is the basolateral cell membrane. It carries out the reaction K(+)(in) = K(+)(out). Channel activity is strongly regulated by variations of cytosolic pH; channels are activated by alkaline and inhibited by acidic pH values. Activated by phosphatidylinositol 4,5 biphosphate (PtdIns(4,5)P2). Its function is as follows. Inward rectifier potassium channels are characterized by a greater tendency to allow potassium to flow into the cell rather than out of it. Their voltage dependence is regulated by the concentration of extracellular potassium; as external potassium is raised, the voltage range of the channel opening shifts to more positive voltages. The inward rectification is mainly due to the blockage of outward current by internal magnesium. KCNJ16 may be involved in the regulation of fluid and pH balance. In the kidney, together with KCNJ10, mediates basolateral K(+) recycling in distal tubules; this process is critical for Na(+) reabsorption at the tubules. This Mus musculus (Mouse) protein is Inward rectifier potassium channel 16 (Kcnj16).